The chain runs to 612 residues: Isocitrate dehydrogenase kinase/phosphatase (612 aa).

ATP contacts are provided by residues Ala-327–Leu-333 and Lys-348. Residue Asp-383 is part of the active site. Residues Ala-593–Ala-612 form a disordered region.

Belongs to the AceK family.

It localises to the cytoplasm. It catalyses the reaction L-seryl-[isocitrate dehydrogenase] + ATP = O-phospho-L-seryl-[isocitrate dehydrogenase] + ADP + H(+). Its function is as follows. Bifunctional enzyme which can phosphorylate or dephosphorylate isocitrate dehydrogenase (IDH) on a specific serine residue. This is a regulatory mechanism which enables bacteria to bypass the Krebs cycle via the glyoxylate shunt in response to the source of carbon. When bacteria are grown on glucose, IDH is fully active and unphosphorylated, but when grown on acetate or ethanol, the activity of IDH declines drastically concomitant with its phosphorylation. The chain is Isocitrate dehydrogenase kinase/phosphatase from Paraburkholderia xenovorans (strain LB400).